Consider the following 234-residue polypeptide: MASLQQTLFSLQSKLPPSSFQIARSLPLRKTFPIRINNGGNAAGARMSATAASSYAMALADVAKRNDTMELTVTDIEKLEQVFSDPQVLNFFANPTITVEKKRQVIDDIVKSSSLQSHTSNFLNVLVDANRINIVTEIVKEFELVYNKLTDTQLAEVRSVVKLEAPQLAQIAKQVQKLTGAKNVRVKTVIDASLVAGFTIRYGESGSKLIDMSVKKQLEDIASQLELGEIQLAT.

The transit peptide at M1 to M47 directs the protein to the chloroplast. S48 carries the post-translational modification N-acetylserine. N66 carries N-linked (GlcNAc...) asparagine glycosylation. T234 carries the phosphothreonine modification.

This sequence belongs to the ATPase delta chain family. As to quaternary structure, F-type ATPases have 2 components, F(1) - the catalytic core - and F(0) - the membrane proton channel. F(1) has five subunits: alpha(3), beta(3), gamma(1), delta(1), epsilon(1). CF(0) has four main subunits: a(1), b(1), b'(1) and c(10-14). The alpha and beta chains form an alternating ring which encloses part of the gamma chain. F(1) is attached to F(0) by a central stalk formed by the gamma and epsilon chains, while a peripheral stalk is formed by the delta, b and b' chains.

Its subcellular location is the plastid. It is found in the chloroplast thylakoid membrane. In terms of biological role, f(1)F(0) ATP synthase produces ATP from ADP in the presence of a proton or sodium gradient. F-type ATPases consist of two structural domains, F(1) containing the extramembraneous catalytic core and F(0) containing the membrane proton channel, linked together by a central stalk and a peripheral stalk. During catalysis, ATP synthesis in the catalytic domain of F(1) is coupled via a rotary mechanism of the central stalk subunits to proton translocation (Potential). Essential for photosynthesis, probably by facilitating electron transport in both photosystems I and II. Functionally, this protein is part of the stalk that links CF(0) to CF(1). It either transmits conformational changes from CF(0) to CF(1) or is implicated in proton conduction. The sequence is that of ATP synthase subunit delta, chloroplastic from Arabidopsis thaliana (Mouse-ear cress).